Here is a 497-residue protein sequence, read N- to C-terminus: 3-octaprenyl-4-hydroxybenzoate carboxy-lyase (497 aa).

Mn(2+) is bound at residue asparagine 175. Residues 178–180, 192–194, and 197–198 contribute to the prenylated FMN site; these read IYR, RWL, and RG. Glutamate 241 serves as a coordination point for Mn(2+). Residue aspartate 290 is the Proton donor of the active site.

The protein belongs to the UbiD family. In terms of assembly, homohexamer. Prenylated FMN serves as cofactor. Requires Mn(2+) as cofactor.

The protein localises to the cell membrane. It catalyses the reaction a 4-hydroxy-3-(all-trans-polyprenyl)benzoate + H(+) = a 2-(all-trans-polyprenyl)phenol + CO2. It participates in cofactor biosynthesis; ubiquinone biosynthesis. Its function is as follows. Catalyzes the decarboxylation of 3-octaprenyl-4-hydroxy benzoate to 2-octaprenylphenol, an intermediate step in ubiquinone biosynthesis. In Shigella dysenteriae serotype 1 (strain Sd197), this protein is 3-octaprenyl-4-hydroxybenzoate carboxy-lyase.